Here is a 659-residue protein sequence, read N- to C-terminus: Putative pentatricopeptide repeat-containing protein At3g16890, mitochondrial (659 aa).

The transit peptide at 1-32 (MRGFASSASRIATAAAASKSLNASTSVNPKLS) directs the protein to the mitochondrion. 15 PPR repeats span residues 109-143 (DQSLKSVLGNALFRKGPLLLSMELLKEIRDSGYRI), 144-178 (SDELMCVLIGSWGRLGLAKYCNDVFAQISFLGMKP), 179-213 (STRLYNAVIDALVKSNSLDLAYLKFQQMRSDGCKP), 214-248 (DRFTYNILIHGVCKKGVVDEAIRLVKQMEQEGNRP), 249-283 (NVFTYTILIDGFLIAGRVDEALKQLEMMRVRKLNP), 284-318 (NEATIRTFVHGIFRCLPPCKAFEVLVGFMEKDSNL), 319-353 (QRVGYDAVLYCLSNNSMAKETGQFLRKIGERGYIP), 354-388 (DSSTFNAAMSCLLKGHDLVETCRIFDGFVSRGVKP), 389-423 (GFNGYLVLVQALLNAQRFSEGDRYLKQMGVDGLLS), 424-458 (SVYSYNAVIDCLCKARRIENAAMFLTEMQDRGISP), 459-493 (NLVTFNTFLSGYSVRGDVKKVHGVLEKLLVHGFKP), 494-528 (DVITFSLIINCLCRAKEIKDAFDCFKEMLEWGIEP), 529-563 (NEITYNILIRSCCSTGDTDRSVKLFAKMKENGLSP), 564-598 (DLYAYNATIQSFCKMRKVKKAEELLKTMLRIGLKP), and 599-633 (DNFTYSTLIKALSESGRESEAREMFSSIERHGCVP).

It belongs to the PPR family. P subfamily.

The protein localises to the mitochondrion. In terms of biological role, required for the ubiquinol-cytochrome c oxidoreductase activity of mitochondrial complex III. The protein is Putative pentatricopeptide repeat-containing protein At3g16890, mitochondrial (PPR40) of Arabidopsis thaliana (Mouse-ear cress).